Consider the following 304-residue polypeptide: NADH-cytochrome b5 reductase 2 (304 aa).

A helical membrane pass occupies residues 9 to 29; sequence MLVALAVIGVTVLLFLIKALG. An FAD-binding FR-type domain is found at 43–155; that stretch reads NAKYPLPLIE…RGPNGLLVYK (113 aa). FAD contacts are provided by residues 135–150 and 174–209; these read DSLKIGETIDFRGPNG and VAKHVGMLAGGTGITPMLQLIRQITQDPNDNTKCSL.

The protein belongs to the flavoprotein pyridine nucleotide cytochrome reductase family. It depends on FAD as a cofactor.

It localises to the membrane. The catalysed reaction is 2 Fe(III)-[cytochrome b5] + NADH = 2 Fe(II)-[cytochrome b5] + NAD(+) + H(+). NADH-cytochrome b5 reductases are involved in desaturation and elongation of fatty acids, cholesterol biosynthesis and drug metabolism. The chain is NADH-cytochrome b5 reductase 2 (cyb5r2) from Xenopus tropicalis (Western clawed frog).